The following is a 522-amino-acid chain: Glutamate--cysteine ligase (522 aa).

This sequence belongs to the glutamate--cysteine ligase type 1 family. Type 1 subfamily.

It carries out the reaction L-cysteine + L-glutamate + ATP = gamma-L-glutamyl-L-cysteine + ADP + phosphate + H(+). Its pathway is sulfur metabolism; glutathione biosynthesis; glutathione from L-cysteine and L-glutamate: step 1/2. The polypeptide is Glutamate--cysteine ligase (Vibrio parahaemolyticus serotype O3:K6 (strain RIMD 2210633)).